The primary structure comprises 171 residues: UPF0398 protein M28_Spy1394 (171 aa).

The protein belongs to the UPF0398 family.

The polypeptide is UPF0398 protein M28_Spy1394 (Streptococcus pyogenes serotype M28 (strain MGAS6180)).